The sequence spans 318 residues: Putative HTH-type transcriptional regulatory protein MJ1164 (318 aa).

The region spanning 131–189 (LKEVREAMGISVGKLAEVAGVSRKAIYKYETQMANPSVDVALKIEEFLDVPLVKGIDLF) is the HTH cro/C1-type domain. Residues 142-161 (VGKLAEVAGVSRKAIYKYET) constitute a DNA-binding region (H-T-H motif).

This chain is Putative HTH-type transcriptional regulatory protein MJ1164, found in Methanocaldococcus jannaschii (strain ATCC 43067 / DSM 2661 / JAL-1 / JCM 10045 / NBRC 100440) (Methanococcus jannaschii).